The chain runs to 110 residues: Protein C-ets-2 (110 aa).

The segment at residues 1 to 84 (SGPIQLWQFL…AGKRYVYRFV (84 aa)) is a DNA-binding region (ETS).

The protein belongs to the ETS family.

It localises to the nucleus. In terms of biological role, probable transcription factor. In Lytechinus variegatus (Green sea urchin), this protein is Protein C-ets-2 (ETS-2).